The primary structure comprises 552 residues: Rhodopsin kinase GRK7 (552 aa).

Ser-36 bears the Phosphoserine; by PKA mark. Positions 56 to 176 (FHSLCEQQPI…LASPFYDKFL (121 aa)) constitute an RGS domain. The Protein kinase domain occupies 191-454 (FEEFRVLGKG…SDDPRKHHFF (264 aa)). Residues 197–205 (LGKGGFGEV) and Lys-220 each bind ATP. The Proton acceptor role is filled by Asp-316. Residues 455–520 (KTINFPRLEA…GAVPIAWQEE (66 aa)) form the AGC-kinase C-terminal domain. A Cysteine methyl ester modification is found at Cys-549. A lipid anchor (S-geranylgeranyl cysteine) is attached at Cys-549. A propeptide spans 550–552 (LLL) (removed in mature form).

The protein belongs to the protein kinase superfamily. AGC Ser/Thr protein kinase family. GPRK subfamily. In terms of assembly, interacts (when prenylated) with PDE6D; this promotes release from membranes. In terms of processing, autophosphorylated in vitro at Ser-490. Phosphorylation at Ser-36 is regulated by light and activated by cAMP.

The protein resides in the membrane. The enzyme catalyses L-threonyl-[rhodopsin] + ATP = O-phospho-L-threonyl-[rhodopsin] + ADP + H(+). It catalyses the reaction L-seryl-[rhodopsin] + ATP = O-phospho-L-seryl-[rhodopsin] + ADP + H(+). With respect to regulation, inhibited by phosphorylation of Ser-36. Functionally, retina-specific kinase involved in the shutoff of the photoresponse and adaptation to changing light conditions via cone opsin phosphorylation, including rhodopsin (RHO). In Bos taurus (Bovine), this protein is Rhodopsin kinase GRK7 (GRK7).